The sequence spans 235 residues: Serine protease SplA (235 aa).

An N-terminal signal peptide occupies residues 1 to 35; the sequence is MNKNVMVKGLTALTILTSLGFAENISNQPHSIAKA. Active-site charge relay system residues include histidine 74, aspartate 113, and serine 189.

It belongs to the peptidase S1B family.

The protein localises to the secreted. The protein is Serine protease SplA (splA) of Staphylococcus aureus (strain USA300).